The chain runs to 432 residues: Cyclic GMP-AMP synthase-like receptor (432 aa).

ATP-binding positions include Ser59 and 71-73 (EFD). Mg(2+)-binding residues include Glu71, Asp73, and Asp205. GTP is bound by residues Asp205 and 255–262 (KQTCSVLE). ATP contacts are provided by residues 259-262 (SVLE), Lys284, and 303-307 (TYALK).

It belongs to the mab-21 family. The cofactor is Mg(2+). Requires Mn(2+) as cofactor.

The enzyme catalyses GTP + ATP = 2',3'-cGAMP + 2 diphosphate. The catalysed reaction is GTP + ATP = pppGp(2'-5')A + diphosphate. It carries out the reaction pppGp(2'-5')A = 2',3'-cGAMP + diphosphate. Functionally, nucleotidyltransferase that catalyzes the formation of cyclic GMP-AMP (2',3'-cGAMP) from ATP and GTP and plays a key role in innate immunity. Directly binds some unknown ligand, activating the nucleotidyltransferase activity, leading to synthesis of 2',3'-cGAMP, a second messenger that binds to and activates Sting, thereby triggering the immune response via activation of the NF-kappa-B transcription factor. This is Cyclic GMP-AMP synthase-like receptor from Pocillopora damicornis (Cauliflower coral).